Consider the following 383-residue polypeptide: Protein phosphatase 2C homolog 4 (383 aa).

In terms of domain architecture, PPM-type phosphatase spans 51-356 (SLGLCTARGD…DDITCLVVRL (306 aa)). Residues Asp-92, Asp-308, and Asp-347 each coordinate Mn(2+).

Belongs to the PP2C family. In terms of assembly, monomer. Requires Mg(2+) as cofactor. Mn(2+) is required as a cofactor.

It is found in the vacuole membrane. It carries out the reaction O-phospho-L-seryl-[protein] + H2O = L-seryl-[protein] + phosphate. It catalyses the reaction O-phospho-L-threonyl-[protein] + H2O = L-threonyl-[protein] + phosphate. Its function is as follows. Has a role in the regulation of vacuole fusion. The sequence is that of Protein phosphatase 2C homolog 4 (ptc4) from Schizosaccharomyces pombe (strain 972 / ATCC 24843) (Fission yeast).